A 408-amino-acid polypeptide reads, in one-letter code: uncharacterized protein (408 aa).

Residues tyrosine 56 to leucine 76 traverse the membrane as a helical segment.

It belongs to the mycobacterial PPE family.

The protein resides in the cell membrane. This is an uncharacterized protein from Mycobacterium bovis (strain ATCC BAA-935 / AF2122/97).